Here is a 95-residue protein sequence, read N- to C-terminus: Small ribosomal subunit protein uS19 (95 aa).

This sequence belongs to the universal ribosomal protein uS19 family.

Its function is as follows. Protein S19 forms a complex with S13 that binds strongly to the 16S ribosomal RNA. This is Small ribosomal subunit protein uS19 from Roseiflexus castenholzii (strain DSM 13941 / HLO8).